Consider the following 39-residue polypeptide: Phospholipase A2 (39 aa).

The active site involves His36.

The protein belongs to the phospholipase A2 family. Group III subfamily. Requires Ca(2+) as cofactor. In terms of tissue distribution, expressed by the venom gland.

It is found in the secreted. The catalysed reaction is a 1,2-diacyl-sn-glycero-3-phosphocholine + H2O = a 1-acyl-sn-glycero-3-phosphocholine + a fatty acid + H(+). Its function is as follows. PLA2 catalyzes the calcium-dependent hydrolysis of the 2-acyl groups in 3-sn-phosphoglycerides. This Heloderma horridum horridum (Mexican beaded lizard) protein is Phospholipase A2.